A 537-amino-acid polypeptide reads, in one-letter code: Chaperonin GroEL (537 aa).

Residues Thr-29 to Pro-32, Asp-86 to Thr-90, Gly-413, and Asp-492 contribute to the ATP site.

The protein belongs to the chaperonin (HSP60) family. As to quaternary structure, forms a cylinder of 14 subunits composed of two heptameric rings stacked back-to-back. Interacts with the co-chaperonin GroES.

Its subcellular location is the cytoplasm. The enzyme catalyses ATP + H2O + a folded polypeptide = ADP + phosphate + an unfolded polypeptide.. In terms of biological role, together with its co-chaperonin GroES, plays an essential role in assisting protein folding. The GroEL-GroES system forms a nano-cage that allows encapsulation of the non-native substrate proteins and provides a physical environment optimized to promote and accelerate protein folding. The polypeptide is Chaperonin GroEL (Dehalococcoides mccartyi (strain ATCC BAA-2266 / KCTC 15142 / 195) (Dehalococcoides ethenogenes (strain 195))).